The sequence spans 309 residues: Methionyl-tRNA formyltransferase (309 aa).

Residue 109–112 (SLLP) participates in (6S)-5,6,7,8-tetrahydrofolate binding.

Belongs to the Fmt family.

The catalysed reaction is L-methionyl-tRNA(fMet) + (6R)-10-formyltetrahydrofolate = N-formyl-L-methionyl-tRNA(fMet) + (6S)-5,6,7,8-tetrahydrofolate + H(+). Its function is as follows. Attaches a formyl group to the free amino group of methionyl-tRNA(fMet). The formyl group appears to play a dual role in the initiator identity of N-formylmethionyl-tRNA by promoting its recognition by IF2 and preventing the misappropriation of this tRNA by the elongation apparatus. The polypeptide is Methionyl-tRNA formyltransferase (Chloroflexus aggregans (strain MD-66 / DSM 9485)).